A 369-amino-acid polypeptide reads, in one-letter code: Probable peptidoglycan glycosyltransferase FtsW (369 aa).

A run of 8 helical transmembrane segments spans residues 11 to 31 (LLSV…SSSV), 48 to 68 (NFIH…VPIY), 77 to 97 (LILC…SNHG), 134 to 151 (TSTI…KLLL), 154 to 174 (PDFG…FLIG), 177 to 197 (FLFL…LIYF), 265 to 285 (LGYL…FQGM), and 306 to 326 (ISLL…GILP).

The protein belongs to the SEDS family. FtsW subfamily.

The protein localises to the cell inner membrane. The enzyme catalyses [GlcNAc-(1-&gt;4)-Mur2Ac(oyl-L-Ala-gamma-D-Glu-L-Lys-D-Ala-D-Ala)](n)-di-trans,octa-cis-undecaprenyl diphosphate + beta-D-GlcNAc-(1-&gt;4)-Mur2Ac(oyl-L-Ala-gamma-D-Glu-L-Lys-D-Ala-D-Ala)-di-trans,octa-cis-undecaprenyl diphosphate = [GlcNAc-(1-&gt;4)-Mur2Ac(oyl-L-Ala-gamma-D-Glu-L-Lys-D-Ala-D-Ala)](n+1)-di-trans,octa-cis-undecaprenyl diphosphate + di-trans,octa-cis-undecaprenyl diphosphate + H(+). The protein operates within cell wall biogenesis; peptidoglycan biosynthesis. In terms of biological role, peptidoglycan polymerase that is essential for cell division. This Riesia pediculicola (strain USDA) protein is Probable peptidoglycan glycosyltransferase FtsW.